The primary structure comprises 306 residues: Proteasome subunit beta (306 aa).

A propeptide spans 1–67 (removed in mature form; by autocatalysis); sequence MTWPNRDQPA…GLPTDAVPHG (67 aa). The active-site Nucleophile is Thr-68.

Belongs to the peptidase T1B family. The 20S proteasome core is composed of 14 alpha and 14 beta subunits that assemble into four stacked heptameric rings, resulting in a barrel-shaped structure. The two inner rings, each composed of seven catalytic beta subunits, are sandwiched by two outer rings, each composed of seven alpha subunits. The catalytic chamber with the active sites is on the inside of the barrel. Has a gated structure, the ends of the cylinder being occluded by the N-termini of the alpha-subunits. Is capped by the proteasome-associated ATPase, ARC.

The protein localises to the cytoplasm. It carries out the reaction Cleavage of peptide bonds with very broad specificity.. The protein operates within protein degradation; proteasomal Pup-dependent pathway. Its activity is regulated as follows. The formation of the proteasomal ATPase ARC-20S proteasome complex, likely via the docking of the C-termini of ARC into the intersubunit pockets in the alpha-rings, may trigger opening of the gate for substrate entry. Interconversion between the open-gate and close-gate conformations leads to a dynamic regulation of the 20S proteasome proteolysis activity. Its function is as follows. Component of the proteasome core, a large protease complex with broad specificity involved in protein degradation. This Mycolicibacterium vanbaalenii (strain DSM 7251 / JCM 13017 / BCRC 16820 / KCTC 9966 / NRRL B-24157 / PYR-1) (Mycobacterium vanbaalenii) protein is Proteasome subunit beta.